A 224-amino-acid polypeptide reads, in one-letter code: Urease accessory protein UreF 2 (224 aa).

This sequence belongs to the UreF family. In terms of assembly, ureD, UreF and UreG form a complex that acts as a GTP-hydrolysis-dependent molecular chaperone, activating the urease apoprotein by helping to assemble the nickel containing metallocenter of UreC. The UreE protein probably delivers the nickel.

The protein localises to the cytoplasm. Required for maturation of urease via the functional incorporation of the urease nickel metallocenter. The chain is Urease accessory protein UreF 2 from Pseudomonas syringae pv. tomato (strain ATCC BAA-871 / DC3000).